A 180-amino-acid chain; its full sequence is Large ribosomal subunit protein uL5 (180 aa).

It belongs to the universal ribosomal protein uL5 family. Part of the 50S ribosomal subunit; part of the 5S rRNA/L5/L18/L25 subcomplex. Contacts the 5S rRNA and the P site tRNA. Forms a bridge to the 30S subunit in the 70S ribosome.

Functionally, this is one of the proteins that bind and probably mediate the attachment of the 5S RNA into the large ribosomal subunit, where it forms part of the central protuberance. In the 70S ribosome it contacts protein S13 of the 30S subunit (bridge B1b), connecting the 2 subunits; this bridge is implicated in subunit movement. Contacts the P site tRNA; the 5S rRNA and some of its associated proteins might help stabilize positioning of ribosome-bound tRNAs. The chain is Large ribosomal subunit protein uL5 from Streptococcus thermophilus (strain ATCC BAA-491 / LMD-9).